The sequence spans 463 residues: Chromosomal replication initiator protein DnaA (463 aa).

Residues 1-83 (MSTNQIILTD…LQLFQHYNNT (83 aa)) form a domain I, interacts with DnaA modulators region. Positions 83–124 (TIKSIEIITKELPGTTQTVTELPTKTFADIGSSELNSENIFS) are domain II. Residues 125–343 (TLDVRFTFDN…GALNKVIAHS (219 aa)) are domain III, AAA+ region. Residues Gly171, Gly173, Lys174, and Thr175 each contribute to the ATP site. Positions 344-463 (NFTLKEITLE…IHLLMKILQN (120 aa)) are domain IV, binds dsDNA.

Belongs to the DnaA family. In terms of assembly, oligomerizes as a right-handed, spiral filament on DNA at oriC.

The protein resides in the cytoplasm. In terms of biological role, plays an essential role in the initiation and regulation of chromosomal replication. ATP-DnaA binds to the origin of replication (oriC) to initiate formation of the DNA replication initiation complex once per cell cycle. Binds the DnaA box (a 9 base pair repeat at the origin) and separates the double-stranded (ds)DNA. Forms a right-handed helical filament on oriC DNA; dsDNA binds to the exterior of the filament while single-stranded (ss)DNA is stabiized in the filament's interior. The ATP-DnaA-oriC complex binds and stabilizes one strand of the AT-rich DNA unwinding element (DUE), permitting loading of DNA polymerase. After initiation quickly degrades to an ADP-DnaA complex that is not apt for DNA replication. Binds acidic phospholipids. The sequence is that of Chromosomal replication initiator protein DnaA from Rickettsia africae (strain ESF-5).